Here is a 565-residue protein sequence, read N- to C-terminus: Heme/hemopexin transporter protein HuxB (565 aa).

A signal peptide spans 1–26 (MKMRPRYSVIASAVSLGFVLSKSVMA). The region spanning 73-150 (FPLKQVQILD…GTVKILLLKG (78 aa)) is the POTRA domain.

It belongs to the TPS (TC 1.B.20) family.

It is found in the cell outer membrane. Functionally, likely functions in the release of soluble HxuA from the cell. Probable member of a two partner secretion pathway (TPS) in which it mediates the secretion of HuxA. This chain is Heme/hemopexin transporter protein HuxB (hxuB), found in Haemophilus influenzae (strain ATCC 51907 / DSM 11121 / KW20 / Rd).